The chain runs to 292 residues: Malectin (292 aa).

Positions 1 to 28 (MLGAWAVEGTAVALLRLLLLLLPPAIRG) are cleaved as a signal peptide. Residues 29–269 (PGLGVAGVAG…TPNPYASDNS (241 aa)) are Lumenal-facing. Positions 82, 104, 131, 132, and 201 each coordinate a carbohydrate. The disordered stretch occupies residues 221–265 (LQPHPGLEKKEEEEEEEEYDEGSNLKKQTNKNRVQSGPRTPNPYA). Acidic residues predominate over residues 231–241 (EEEEEEEEYDE). Residues 245-265 (LKKQTNKNRVQSGPRTPNPYA) are compositionally biased toward polar residues. Asn268 is a glycosylation site (N-linked (GlcNAc...) asparagine). A helical transmembrane segment spans residues 270–290 (SLMFPILVAFGVFIPTLFCLC). Over 291-292 (RL) the chain is Cytoplasmic.

The protein belongs to the malectin family. In terms of assembly, interacts with the oligosaccharyltransferase (OST) complex.

The protein resides in the endoplasmic reticulum membrane. Functionally, carbohydrate-binding protein with a strong ligand preference for Glc2-N-glycan. May play a role in the early steps of protein N-glycosylation. This chain is Malectin, found in Homo sapiens (Human).